The primary structure comprises 361 residues: Holliday junction branch migration complex subunit RuvB (361 aa).

A disordered region spans residues 1–21 (MHKDEDQRLLGAVPLPNDPDR). The segment at 1 to 184 (MHKDEDQRLL…FGIPIRLNFY (184 aa)) is large ATPase domain (RuvB-L). ATP-binding positions include Leu23, Arg24, Gly65, Lys68, Thr69, Thr70, 131-133 (EDY), Arg174, Tyr184, and Arg221. Thr69 is a binding site for Mg(2+). The tract at residues 185–255 (TIEELEYIVQ…IADEALSRLE (71 aa)) is small ATPAse domain (RuvB-S). Positions 258–361 (HLGLDPLDRR…QTVLWDEADD (104 aa)) are head domain (RuvB-H). 3 residues coordinate DNA: Arg294, Arg313, and Arg318.

The protein belongs to the RuvB family. Homohexamer. Forms an RuvA(8)-RuvB(12)-Holliday junction (HJ) complex. HJ DNA is sandwiched between 2 RuvA tetramers; dsDNA enters through RuvA and exits via RuvB. An RuvB hexamer assembles on each DNA strand where it exits the tetramer. Each RuvB hexamer is contacted by two RuvA subunits (via domain III) on 2 adjacent RuvB subunits; this complex drives branch migration. In the full resolvosome a probable DNA-RuvA(4)-RuvB(12)-RuvC(2) complex forms which resolves the HJ.

It localises to the cytoplasm. The catalysed reaction is ATP + H2O = ADP + phosphate + H(+). The RuvA-RuvB-RuvC complex processes Holliday junction (HJ) DNA during genetic recombination and DNA repair, while the RuvA-RuvB complex plays an important role in the rescue of blocked DNA replication forks via replication fork reversal (RFR). RuvA specifically binds to HJ cruciform DNA, conferring on it an open structure. The RuvB hexamer acts as an ATP-dependent pump, pulling dsDNA into and through the RuvAB complex. RuvB forms 2 homohexamers on either side of HJ DNA bound by 1 or 2 RuvA tetramers; 4 subunits per hexamer contact DNA at a time. Coordinated motions by a converter formed by DNA-disengaged RuvB subunits stimulates ATP hydrolysis and nucleotide exchange. Immobilization of the converter enables RuvB to convert the ATP-contained energy into a lever motion, pulling 2 nucleotides of DNA out of the RuvA tetramer per ATP hydrolyzed, thus driving DNA branch migration. The RuvB motors rotate together with the DNA substrate, which together with the progressing nucleotide cycle form the mechanistic basis for DNA recombination by continuous HJ branch migration. Branch migration allows RuvC to scan DNA until it finds its consensus sequence, where it cleaves and resolves cruciform DNA. This is Holliday junction branch migration complex subunit RuvB from Bartonella henselae (strain ATCC 49882 / DSM 28221 / CCUG 30454 / Houston 1) (Rochalimaea henselae).